We begin with the raw amino-acid sequence, 656 residues long: ATP-dependent zinc metalloprotease FtsH (656 aa).

The Cytoplasmic portion of the chain corresponds to 1-10; sequence MGDNRWLKNS. Residues 11–31 traverse the membrane as a helical segment; the sequence is FVYLIILVAALALFFQYLGPG. Topologically, residues 32–116 are extracellular; sequence ASQTEEKGIA…IVQPAPAWGG (85 aa). A helical transmembrane segment spans residues 117 to 137; that stretch reads LLSIFTILLPTLLLIGFFVFF. At 138-656 the chain is on the cytoplasmic side; that stretch reads MRQAQGSNNQ…GLGGPSPLPA (519 aa). Residue 209–216 coordinates ATP; the sequence is GPPGTGKT. His-432 serves as a coordination point for Zn(2+). The active site involves Glu-433. Positions 436 and 511 each coordinate Zn(2+). Polar residues predominate over residues 622 to 632; that stretch reads FSKSGSTTPNG. The interval 622 to 656 is disordered; the sequence is FSKSGSTTPNGRTEDRPAQPDAPQMGLGGPSPLPA.

The protein in the central section; belongs to the AAA ATPase family. This sequence in the C-terminal section; belongs to the peptidase M41 family. Homohexamer. Zn(2+) is required as a cofactor.

The protein resides in the cell membrane. Its function is as follows. Acts as a processive, ATP-dependent zinc metallopeptidase for both cytoplasmic and membrane proteins. Plays a role in the quality control of integral membrane proteins. This Chloroflexus aggregans (strain MD-66 / DSM 9485) protein is ATP-dependent zinc metalloprotease FtsH.